Consider the following 299-residue polypeptide: F-actin-capping protein subunit alpha-3 (299 aa).

Residues serine 2 and serine 290 each carry the phosphoserine modification.

This sequence belongs to the F-actin-capping protein alpha subunit family. Component of the F-actin capping complex, composed of a heterodimer of an alpha and a beta subunit. Component of the WASH complex, composed of F-actin-capping protein subunit alpha (CAPZA1, CAPZA2 or CAPZA3), F-actin-capping protein subunit beta (CAPZB), WASHC1, WASHC2, WASHC3, WASHC4 and WASHC5. In terms of tissue distribution, exclusively expressed in the testis.

The protein resides in the cytoplasm. It is found in the cytoskeleton. In terms of biological role, F-actin-capping proteins bind in a Ca(2+)-independent manner to the fast growing ends of actin filaments (barbed end) thereby blocking the exchange of subunits at these ends. Unlike other capping proteins (such as gelsolin and severin), these proteins do not sever actin filaments. May play a role in the morphogenesis of spermatid. This Mus musculus (Mouse) protein is F-actin-capping protein subunit alpha-3 (Capza3).